The primary structure comprises 127 residues: Aspartate 1-decarboxylase (127 aa).

Serine 25 functions as the Schiff-base intermediate with substrate; via pyruvic acid in the catalytic mechanism. A Pyruvic acid (Ser) modification is found at serine 25. Threonine 57 is a binding site for substrate. Tyrosine 58 functions as the Proton donor in the catalytic mechanism. 73–75 (GAA) contacts substrate.

The protein belongs to the PanD family. In terms of assembly, heterooctamer of four alpha and four beta subunits. The cofactor is pyruvate. Post-translationally, is synthesized initially as an inactive proenzyme, which is activated by self-cleavage at a specific serine bond to produce a beta-subunit with a hydroxyl group at its C-terminus and an alpha-subunit with a pyruvoyl group at its N-terminus.

It is found in the cytoplasm. The enzyme catalyses L-aspartate + H(+) = beta-alanine + CO2. Its pathway is cofactor biosynthesis; (R)-pantothenate biosynthesis; beta-alanine from L-aspartate: step 1/1. Catalyzes the pyruvoyl-dependent decarboxylation of aspartate to produce beta-alanine. The polypeptide is Aspartate 1-decarboxylase (Staphylococcus aureus (strain JH1)).